The primary structure comprises 115 residues: Cell division protein FtsL (115 aa).

Over 1–25 (MNTATRVIVAQNVRTRNRTFQITKQ) the chain is Cytoplasmic. The chain crosses the membrane as a helical span at residues 26 to 46 (GVVIVALVIALLCSAFGVVYF). Residues 47–115 (KDLNRRLFIQ…ILVNADAMIE (69 aa)) lie on the Periplasmic side of the membrane.

Belongs to the FtsL family. In terms of assembly, part of a complex composed of FtsB, FtsL and FtsQ.

It is found in the cell inner membrane. Functionally, essential cell division protein. May link together the upstream cell division proteins, which are predominantly cytoplasmic, with the downstream cell division proteins, which are predominantly periplasmic. In Coxiella burnetii (strain RSA 493 / Nine Mile phase I), this protein is Cell division protein FtsL.